A 647-amino-acid chain; its full sequence is Acetyl-coenzyme A synthetase (647 aa).

Residues 192–195, threonine 310, and asparagine 334 each bind CoA; that span reads RGGR. Residues 386–388, 410–415, aspartate 499, and arginine 514 contribute to the ATP site; these read GEP and DTWWQT. Serine 522 contributes to the CoA binding site. Arginine 525 lines the ATP pocket. Mg(2+) is bound by residues valine 536, histidine 538, and valine 541. Arginine 583 serves as a coordination point for CoA. An N6-acetyllysine modification is found at lysine 608.

The protein belongs to the ATP-dependent AMP-binding enzyme family. Mg(2+) is required as a cofactor. Acetylated. Deacetylation by the SIR2-homolog deacetylase activates the enzyme.

It carries out the reaction acetate + ATP + CoA = acetyl-CoA + AMP + diphosphate. In terms of biological role, catalyzes the conversion of acetate into acetyl-CoA (AcCoA), an essential intermediate at the junction of anabolic and catabolic pathways. AcsA undergoes a two-step reaction. In the first half reaction, AcsA combines acetate with ATP to form acetyl-adenylate (AcAMP) intermediate. In the second half reaction, it can then transfer the acetyl group from AcAMP to the sulfhydryl group of CoA, forming the product AcCoA. This chain is Acetyl-coenzyme A synthetase, found in Caulobacter vibrioides (strain ATCC 19089 / CIP 103742 / CB 15) (Caulobacter crescentus).